Here is a 243-residue protein sequence, read N- to C-terminus: Uridylate kinase (243 aa).

ATP is bound at residue 15–18 (KMSG). Gly57 serves as a coordination point for UMP. ATP is bound by residues Gly58 and Arg62. Residues Asp77 and 138–145 (TGNPLVTT) contribute to the UMP site. ATP contacts are provided by Thr165, Asn166, Tyr171, and Asp174.

This sequence belongs to the UMP kinase family. Homohexamer.

It localises to the cytoplasm. It catalyses the reaction UMP + ATP = UDP + ADP. The protein operates within pyrimidine metabolism; CTP biosynthesis via de novo pathway; UDP from UMP (UMPK route): step 1/1. With respect to regulation, inhibited by UTP. Functionally, catalyzes the reversible phosphorylation of UMP to UDP. This is Uridylate kinase from Coxiella burnetii (strain RSA 493 / Nine Mile phase I).